The following is a 184-amino-acid chain: Gremlin-1 (184 aa).

The N-terminal stretch at 1–24 (MVRTLYAIGAVFLLTGFLLPTAEG) is a signal peptide. Positions 24–77 (GRKRNRGSQGAIPPPDKDQPNDSEQMQTQQQSGSRHRERGKGTSMPAEEVLESS) are disordered. N-linked (GlcNAc...) asparagine glycosylation occurs at asparagine 44. Residues 45-56 (DSEQMQTQQQSG) show a composition bias toward polar residues. Disulfide bonds link cysteine 94–cysteine 144, cysteine 108–cysteine 158, cysteine 118–cysteine 176, and cysteine 122–cysteine 178. Residues 94-184 (CKTQPLKQTI…ECRCISIDLD (91 aa)) enclose the CTCK domain.

It belongs to the DAN family.

The protein localises to the secreted. In terms of biological role, cytokine that may play a role in the development of the medial pallium and during optic nerve and pecten development by modulating BMP signaling. The sequence is that of Gremlin-1 (GREM1) from Gallus gallus (Chicken).